The chain runs to 221 residues: PKHD-type hydroxylase PMT_0286 (221 aa).

Residues 80-174 form the Fe2OG dioxygenase domain; that stretch reads HIHGVMFSRS…RLVCVGWIQS (95 aa). His98, Asp100, and His155 together coordinate Fe cation. Position 165 (Arg165) interacts with 2-oxoglutarate.

The cofactor is Fe(2+). L-ascorbate serves as cofactor.

The polypeptide is PKHD-type hydroxylase PMT_0286 (Prochlorococcus marinus (strain MIT 9313)).